Reading from the N-terminus, the 43-residue chain is Omega-agatoxin-Aa3c (43 aa).

3 disulfide bridges follow: C2/C19, C9/C25, and C27/C38.

Belongs to the neurotoxin 04 (omega-agtx) family. 03 (type II/III omega-agtx) subfamily. Expressed by the venom gland.

Its subcellular location is the secreted. In terms of biological role, omega-agatoxins are antagonists of voltage-gated calcium channels (Cav). This Agelenopsis aperta (North American funnel-web spider) protein is Omega-agatoxin-Aa3c.